The following is a 522-amino-acid chain: Gypsy retrotransposon integrase-like protein 1 (522 aa).

Residues K135 to N292 form the Integrase catalytic domain. At S502 the chain carries Phosphoserine.

The protein is Gypsy retrotransposon integrase-like protein 1 (GIN1) of Pongo abelii (Sumatran orangutan).